The primary structure comprises 129 residues: Large ribosomal subunit protein bL17 (129 aa).

This sequence belongs to the bacterial ribosomal protein bL17 family. As to quaternary structure, part of the 50S ribosomal subunit. Contacts protein L32.

This chain is Large ribosomal subunit protein bL17, found in Thiobacillus denitrificans (strain ATCC 25259 / T1).